Reading from the N-terminus, the 146-residue chain is 3-dehydroquinate dehydratase (146 aa).

The Proton acceptor role is filled by Tyr-22. Substrate-binding residues include Asn-74, His-80, and Asp-87. His-100 serves as the catalytic Proton donor. Substrate-binding positions include 101–102 (LS) and Arg-111.

This sequence belongs to the type-II 3-dehydroquinase family. In terms of assembly, homododecamer.

The enzyme catalyses 3-dehydroquinate = 3-dehydroshikimate + H2O. It participates in metabolic intermediate biosynthesis; chorismate biosynthesis; chorismate from D-erythrose 4-phosphate and phosphoenolpyruvate: step 3/7. In terms of biological role, catalyzes a trans-dehydration via an enolate intermediate. This is 3-dehydroquinate dehydratase from Clostridium perfringens (strain SM101 / Type A).